The sequence spans 316 residues: tRNA dimethylallyltransferase (316 aa).

17–24 provides a ligand contact to ATP; that stretch reads GPTASGKT. A substrate-binding site is contributed by 19-24; it reads TASGKT. Interaction with substrate tRNA stretches follow at residues 42 to 45, 166 to 170, 247 to 252, and 280 to 287; these read DSAL, QRLSR, RCVGYR, and KRQITWLR.

This sequence belongs to the IPP transferase family. In terms of assembly, monomer. Mg(2+) serves as cofactor.

The catalysed reaction is adenosine(37) in tRNA + dimethylallyl diphosphate = N(6)-dimethylallyladenosine(37) in tRNA + diphosphate. Its function is as follows. Catalyzes the transfer of a dimethylallyl group onto the adenine at position 37 in tRNAs that read codons beginning with uridine, leading to the formation of N6-(dimethylallyl)adenosine (i(6)A). The sequence is that of tRNA dimethylallyltransferase from Escherichia coli O157:H7.